Consider the following 397-residue polypeptide: Succinate--CoA ligase [ADP-forming] subunit beta (397 aa).

Positions 9-254 (KALLRQYGAP…ETEEDPKELA (246 aa)) constitute an ATP-grasp domain. Residues lysine 46, 53 to 55 (GRG), glutamate 109, serine 112, and glutamate 117 contribute to the ATP site. The Mg(2+) site is built by asparagine 209 and aspartate 223. Residues asparagine 274 and 331-333 (GIM) each bind substrate.

This sequence belongs to the succinate/malate CoA ligase beta subunit family. As to quaternary structure, heterotetramer of two alpha and two beta subunits. Mg(2+) serves as cofactor.

The enzyme catalyses succinate + ATP + CoA = succinyl-CoA + ADP + phosphate. The catalysed reaction is GTP + succinate + CoA = succinyl-CoA + GDP + phosphate. The protein operates within carbohydrate metabolism; tricarboxylic acid cycle; succinate from succinyl-CoA (ligase route): step 1/1. Its function is as follows. Succinyl-CoA synthetase functions in the citric acid cycle (TCA), coupling the hydrolysis of succinyl-CoA to the synthesis of either ATP or GTP and thus represents the only step of substrate-level phosphorylation in the TCA. The beta subunit provides nucleotide specificity of the enzyme and binds the substrate succinate, while the binding sites for coenzyme A and phosphate are found in the alpha subunit. The chain is Succinate--CoA ligase [ADP-forming] subunit beta from Paracoccus denitrificans (strain Pd 1222).